Reading from the N-terminus, the 966-residue chain is RNA polymerase-associated protein RapA (966 aa).

A Helicase ATP-binding domain is found at 163–337 (EVGRRIAPRV…FARLHLLDPN (175 aa)). 176–183 (DEVGLGKT) is a binding site for ATP. The DEAH box motif lies at 283–286 (DEAH). Positions 489-643 (RVDWLINLVK…TCPMGAILHE (155 aa)) constitute a Helicase C-terminal domain.

Belongs to the SNF2/RAD54 helicase family. RapA subfamily. Interacts with the RNAP. Has a higher affinity for the core RNAP than for the holoenzyme. Its ATPase activity is stimulated by binding to RNAP.

Its function is as follows. Transcription regulator that activates transcription by stimulating RNA polymerase (RNAP) recycling in case of stress conditions such as supercoiled DNA or high salt concentrations. Probably acts by releasing the RNAP, when it is trapped or immobilized on tightly supercoiled DNA. Does not activate transcription on linear DNA. Probably not involved in DNA repair. The sequence is that of RNA polymerase-associated protein RapA from Histophilus somni (strain 129Pt) (Haemophilus somnus).